Reading from the N-terminus, the 405-residue chain is Chorismate synthase (405 aa).

Residues arginine 43 and arginine 49 each contribute to the NADP(+) site. Residues 138–140 (RAS) and 259–260 (QA) each bind FMN. Residues 275–286 (RRGSQAHDEMRP) are compositionally biased toward basic and acidic residues. Residues 275-308 (RRGSQAHDEMRPGPDGVLRSTNRAGGLEGGMTNG) form a disordered region. FMN contacts are provided by residues glycine 303, 318 to 322 (KPIST), and arginine 344.

Belongs to the chorismate synthase family. As to quaternary structure, homotetramer. FMNH2 serves as cofactor.

It carries out the reaction 5-O-(1-carboxyvinyl)-3-phosphoshikimate = chorismate + phosphate. It functions in the pathway metabolic intermediate biosynthesis; chorismate biosynthesis; chorismate from D-erythrose 4-phosphate and phosphoenolpyruvate: step 7/7. In terms of biological role, catalyzes the anti-1,4-elimination of the C-3 phosphate and the C-6 proR hydrogen from 5-enolpyruvylshikimate-3-phosphate (EPSP) to yield chorismate, which is the branch point compound that serves as the starting substrate for the three terminal pathways of aromatic amino acid biosynthesis. This reaction introduces a second double bond into the aromatic ring system. This Nocardia farcinica (strain IFM 10152) protein is Chorismate synthase.